The sequence spans 282 residues: 4-hydroxy-3-methylbut-2-enyl diphosphate reductase (282 aa).

Cysteine 12 provides a ligand contact to [4Fe-4S] cluster. (2E)-4-hydroxy-3-methylbut-2-enyl diphosphate-binding residues include histidine 40 and histidine 72. Dimethylallyl diphosphate is bound by residues histidine 40 and histidine 72. 2 residues coordinate isopentenyl diphosphate: histidine 40 and histidine 72. Residue cysteine 94 coordinates [4Fe-4S] cluster. Histidine 122 is a (2E)-4-hydroxy-3-methylbut-2-enyl diphosphate binding site. A dimethylallyl diphosphate-binding site is contributed by histidine 122. Histidine 122 contributes to the isopentenyl diphosphate binding site. Glutamate 124 acts as the Proton donor in catalysis. Threonine 160 lines the (2E)-4-hydroxy-3-methylbut-2-enyl diphosphate pocket. Position 188 (cysteine 188) interacts with [4Fe-4S] cluster. Residues serine 216, asparagine 218, and serine 260 each contribute to the (2E)-4-hydroxy-3-methylbut-2-enyl diphosphate site. 3 residues coordinate dimethylallyl diphosphate: serine 216, asparagine 218, and serine 260. The isopentenyl diphosphate site is built by serine 216, asparagine 218, and serine 260.

The protein belongs to the IspH family. The cofactor is [4Fe-4S] cluster.

The enzyme catalyses isopentenyl diphosphate + 2 oxidized [2Fe-2S]-[ferredoxin] + H2O = (2E)-4-hydroxy-3-methylbut-2-enyl diphosphate + 2 reduced [2Fe-2S]-[ferredoxin] + 2 H(+). It carries out the reaction dimethylallyl diphosphate + 2 oxidized [2Fe-2S]-[ferredoxin] + H2O = (2E)-4-hydroxy-3-methylbut-2-enyl diphosphate + 2 reduced [2Fe-2S]-[ferredoxin] + 2 H(+). Its pathway is isoprenoid biosynthesis; dimethylallyl diphosphate biosynthesis; dimethylallyl diphosphate from (2E)-4-hydroxy-3-methylbutenyl diphosphate: step 1/1. It functions in the pathway isoprenoid biosynthesis; isopentenyl diphosphate biosynthesis via DXP pathway; isopentenyl diphosphate from 1-deoxy-D-xylulose 5-phosphate: step 6/6. Functionally, catalyzes the conversion of 1-hydroxy-2-methyl-2-(E)-butenyl 4-diphosphate (HMBPP) into a mixture of isopentenyl diphosphate (IPP) and dimethylallyl diphosphate (DMAPP). Acts in the terminal step of the DOXP/MEP pathway for isoprenoid precursor biosynthesis. The polypeptide is 4-hydroxy-3-methylbut-2-enyl diphosphate reductase (Geotalea daltonii (strain DSM 22248 / JCM 15807 / FRC-32) (Geobacter daltonii)).